We begin with the raw amino-acid sequence, 567 residues long: Interleukin-1 receptor-like 1 (567 aa).

Positions 1-26 (MIDRQRMGLWALAILTLPMYLTVTEG) are cleaved as a signal peptide. 2 consecutive Ig-like C2-type domains span residues 27 to 109 (SKSS…LNVT) and 120 to 203 (PDYL…VTAT). Residues 27-332 (SKSSWGLENE…LRRKQPIDHR (306 aa)) lie on the Extracellular side of the membrane. The cysteines at positions 42 and 93 are disulfide-linked. N-linked (GlcNAc...) asparagine glycans are attached at residues Asn60, Asn101, Asn107, Asn146, Asn176, and Asn194. 2 cysteine pairs are disulfide-bonded: Cys117/Cys157 and Cys139/Cys187. The tract at residues 204 to 216 (RSFTVEEKGFSMF) is flexible linker. In terms of domain architecture, Ig-like C2-type 3 spans 217 to 324 (PVITNPPYNH…GMIRHTIRLR (108 aa)). Asn225, Asn259, and Asn278 each carry an N-linked (GlcNAc...) asparagine glycan. Disulfide bonds link Cys240–Cys308 and Cys243–Cys287. Lys326 is covalently cross-linked (Glycyl lysine isopeptide (Lys-Gly) (interchain with G-Cter in ubiquitin)). The chain crosses the membrane as a helical span at residues 333 to 355 (SIYYIVAGCSLLLMFINVLVIVL). Residues 356–567 (KVFWIEVALF…GKACLDLKHF (212 aa)) lie on the Cytoplasmic side of the membrane. The TIR domain occupies 380–540 (KLYDAYIIYP…KFWKHVRYQM (161 aa)). Phosphoserine; by GSK3-beta is present on Ser442. Glu466 is a catalytic residue.

The protein belongs to the interleukin-1 receptor family. As to quaternary structure, interacts with MYD88, IRAK1, IRAK4, and TRAF6. Bound to its ligand IL33, interacts with IL1RAP to form the minimal interleukin-33 signaling complex with a 1:1:1 stoichiometry. Interacts with KIT (bound to KITLG/SCF). A mast cell-specific KITLG/SCF-induced interleukin-33 signaling complex contains IL1RL1, IL1RAP, KIT and MYD88. Interacts with TMED1. In terms of processing, phosphorylated by GSK3B at Ser-442; leading to proteasomal degradation. Ubiquitinated at Lys-326 in a FBXL19-mediated manner; leading to proteasomal degradation. Ubiquitination by TRAF6 via 'Lys-27'-linked polyubiquitination and deubiquitination by USP38 serves as a critical regulatory mechanism for fine-tuning IL1RL1-mediated inflammatory response. Predominantly expressed in hematopoietic tissues, and in macrophage, erythroid, epithelial and fibroblast cell lines. Isoform A is expressed in brain astrocytes and microglia. Isoform B is expressed in brain endothelial cells.

Its subcellular location is the cell membrane. It localises to the secreted. It catalyses the reaction NAD(+) + H2O = ADP-D-ribose + nicotinamide + H(+). In terms of biological role, receptor for interleukin-33 (IL-33) which plays crucial roles in innate and adaptive immunity, contributing to tissue homeostasis and responses to environmental stresses together with coreceptor IL1RAP. Its stimulation recruits MYD88, IRAK1, IRAK4, and TRAF6, followed by phosphorylation of MAPK3/ERK1 and/or MAPK1/ERK2, MAPK14, and MAPK8. Possibly involved in helper T-cell function. Upon tissue injury, induces UCP2-dependent mitochondrial rewiring that attenuates the generation of reactive oxygen species and preserves the integrity of Krebs cycle required for persistent production of itaconate and subsequent GATA3-dependent differentiation of inflammation-resolving alternatively activated macrophages. Inhibits IL-33 signaling. In Mus musculus (Mouse), this protein is Interleukin-1 receptor-like 1 (Il1rl1).